The primary structure comprises 284 residues: ATP synthase subunit a (284 aa).

Helical transmembrane passes span 55–75 (AIHV…LGLF), 116–136 (IAPL…LKLI), 165–185 (FGMS…VKGV), 196–216 (PFNH…ALII), 234–254 (VVFI…NVPW), and 255–275 (AIFH…LTVV).

Belongs to the ATPase A chain family. As to quaternary structure, F-type ATPases have 2 components, CF(1) - the catalytic core - and CF(0) - the membrane proton channel. CF(1) has five subunits: alpha(3), beta(3), gamma(1), delta(1), epsilon(1). CF(0) has three main subunits: a(1), b(2) and c(9-12). The alpha and beta chains form an alternating ring which encloses part of the gamma chain. CF(1) is attached to CF(0) by a central stalk formed by the gamma and epsilon chains, while a peripheral stalk is formed by the delta and b chains.

The protein resides in the cell inner membrane. Its function is as follows. Key component of the proton channel; it plays a direct role in the translocation of protons across the membrane. The polypeptide is ATP synthase subunit a (Marinobacter nauticus (strain ATCC 700491 / DSM 11845 / VT8) (Marinobacter aquaeolei)).